A 65-amino-acid chain; its full sequence is U15-hexatoxin-Mg1b (65 aa).

Post-translationally, contains 4 disulfide bonds. In terms of tissue distribution, expressed by the venom gland.

The protein localises to the secreted. Its function is as follows. In vivo, intrathorax injection into crickets causes death. This chain is U15-hexatoxin-Mg1b, found in Macrothele gigas (Japanese funnel web spider).